A 154-amino-acid chain; its full sequence is MDQKIQSLPAKKNIALVAHDGKKAALKLWCIKHLNALSEHTLYATGTTGHLINKTTGLDVIQLLSGPMGGDQQLGAKIAEHEIHMLVFFWDPLASQPHDPDVKALLRLAAVWNIPVACNEVSADMLLSSPLMNVELERTLPDYEKYLATRQIDI.

In terms of domain architecture, MGS-like spans Q6 to I154. Substrate-binding positions include H19, K23, T45–T48, and S65–G66. The active-site Proton donor/acceptor is the D71. Residue H98 coordinates substrate.

This sequence belongs to the methylglyoxal synthase family.

It carries out the reaction dihydroxyacetone phosphate = methylglyoxal + phosphate. Functionally, catalyzes the formation of methylglyoxal from dihydroxyacetone phosphate. In Pseudoalteromonas translucida (strain TAC 125), this protein is Methylglyoxal synthase.